The sequence spans 239 residues: Lipoprotein-releasing system ATP-binding protein LolD (239 aa).

One can recognise an ABC transporter domain in the interval 14 to 239 (IRAERLGKTY…KLRELAPSAV (226 aa)). 50–57 (GASGAGKS) lines the ATP pocket.

The protein belongs to the ABC transporter superfamily. Lipoprotein translocase (TC 3.A.1.125) family. In terms of assembly, the complex is composed of two ATP-binding proteins (LolD) and two transmembrane proteins (LolC and LolE).

It is found in the cell inner membrane. Part of the ABC transporter complex LolCDE involved in the translocation of mature outer membrane-directed lipoproteins, from the inner membrane to the periplasmic chaperone, LolA. Responsible for the formation of the LolA-lipoprotein complex in an ATP-dependent manner. This is Lipoprotein-releasing system ATP-binding protein LolD from Xanthomonas campestris pv. campestris (strain 8004).